Here is a 495-residue protein sequence, read N- to C-terminus: Glutamyl-tRNA(Gln) amidotransferase subunit A (495 aa).

Active-site charge relay system residues include K78 and S159. S183 functions as the Acyl-ester intermediate in the catalytic mechanism.

The protein belongs to the amidase family. GatA subfamily. As to quaternary structure, heterotrimer of A, B and C subunits.

The enzyme catalyses L-glutamyl-tRNA(Gln) + L-glutamine + ATP + H2O = L-glutaminyl-tRNA(Gln) + L-glutamate + ADP + phosphate + H(+). In terms of biological role, allows the formation of correctly charged Gln-tRNA(Gln) through the transamidation of misacylated Glu-tRNA(Gln) in organisms which lack glutaminyl-tRNA synthetase. The reaction takes place in the presence of glutamine and ATP through an activated gamma-phospho-Glu-tRNA(Gln). This chain is Glutamyl-tRNA(Gln) amidotransferase subunit A, found in Rhizorhabdus wittichii (strain DSM 6014 / CCUG 31198 / JCM 15750 / NBRC 105917 / EY 4224 / RW1) (Sphingomonas wittichii).